Here is a 162-residue protein sequence, read N- to C-terminus: Ribosome maturation factor RimP (162 aa).

It belongs to the RimP family.

It is found in the cytoplasm. Its function is as follows. Required for maturation of 30S ribosomal subunits. The protein is Ribosome maturation factor RimP of Cupriavidus necator (strain ATCC 17699 / DSM 428 / KCTC 22496 / NCIMB 10442 / H16 / Stanier 337) (Ralstonia eutropha).